Reading from the N-terminus, the 154-residue chain is Crossover junction endodeoxyribonuclease RuvC (154 aa).

Residues Asp7, Glu67, and Asp139 contribute to the active site. Mg(2+)-binding residues include Asp7, Glu67, and Asp139.

It belongs to the RuvC family. Homodimer which binds Holliday junction (HJ) DNA. The HJ becomes 2-fold symmetrical on binding to RuvC with unstacked arms; it has a different conformation from HJ DNA in complex with RuvA. In the full resolvosome a probable DNA-RuvA(4)-RuvB(12)-RuvC(2) complex forms which resolves the HJ. The cofactor is Mg(2+).

The protein resides in the cytoplasm. The enzyme catalyses Endonucleolytic cleavage at a junction such as a reciprocal single-stranded crossover between two homologous DNA duplexes (Holliday junction).. The RuvA-RuvB-RuvC complex processes Holliday junction (HJ) DNA during genetic recombination and DNA repair. Endonuclease that resolves HJ intermediates. Cleaves cruciform DNA by making single-stranded nicks across the HJ at symmetrical positions within the homologous arms, yielding a 5'-phosphate and a 3'-hydroxyl group; requires a central core of homology in the junction. The consensus cleavage sequence is 5'-(A/T)TT(C/G)-3'. Cleavage occurs on the 3'-side of the TT dinucleotide at the point of strand exchange. HJ branch migration catalyzed by RuvA-RuvB allows RuvC to scan DNA until it finds its consensus sequence, where it cleaves and resolves the cruciform DNA. This chain is Crossover junction endodeoxyribonuclease RuvC, found in Synechococcus sp. (strain CC9902).